The chain runs to 609 residues: D-apionate lactonase (609 aa).

The catalysed reaction is D-apionolactone + H2O = D-apionate + H(+). It participates in carbohydrate metabolism. Involved in catabolism of D-apiose. Hydrolyzes D-apionolactone to D-apionate. The protein is D-apionate lactonase of Brucella anthropi (strain ATCC 49188 / DSM 6882 / CCUG 24695 / JCM 21032 / LMG 3331 / NBRC 15819 / NCTC 12168 / Alc 37) (Ochrobactrum anthropi).